A 1053-amino-acid polypeptide reads, in one-letter code: Focal adhesion kinase 1 (1053 aa).

The disordered stretch occupies residues 1–27 (MAAAYLDPNLNHTPSSSAKTHLGTGME). Polar residues predominate over residues 10–19 (LNHTPSSSAK). The 321-residue stretch at 35–355 (RVLKVFHYFE…GYCRLVNGAT (321 aa)) folds into the FERM domain. Position 397 is a phosphotyrosine; by autocatalysis (Y397). Phosphotyrosine is present on Y407. In terms of domain architecture, Protein kinase spans 422–680 (IELGRCIGEG…ELKAQLSTIL (259 aa)). ATP contacts are provided by residues 428-434 (IGEGQFG), K454, and 500-502 (ELC). The active-site Proton acceptor is D546. Phosphotyrosine; by SRC occurs at positions 576 and 577. Basic and acidic residues predominate over residues 686 to 697 (QQEERMRMESRR). Disordered regions lie at residues 686-741 (QQEE…QPNH) and 843-892 (RGSI…LASL). A Phosphotyrosine modification is found at Y863. S911 bears the Phosphoserine mark. Phosphotyrosine is present on Y926.

The protein belongs to the protein kinase superfamily. Tyr protein kinase family. FAK subfamily. Interacts with ARHGAP26, GRB7, DCC, PIK3R1, PXN and SRC. Interacts with the ARP2/3 complex. In terms of processing, phosphorylated on tyrosine residues upon activation, e.g. upon integrin signaling. Tyr-397 is the major autophosphorylation site, but other kinases can also phosphorylate this residue. Phosphorylation at Tyr-397 promotes interaction with SRC and SRC family members, leading to phosphorylation at Tyr-576, Tyr-577 and at additional tyrosine residues. Isoform 2 is phosphorylated on serine or threonine residues, but apparently not on tyrosine residues.

The protein localises to the cell junction. It localises to the focal adhesion. It is found in the cell membrane. The protein resides in the cytoplasm. Its subcellular location is the perinuclear region. The protein localises to the cell cortex. It localises to the cytoskeleton. It is found in the microtubule organizing center. The protein resides in the centrosome. Its subcellular location is the nucleus. The protein localises to the cilium basal body. The enzyme catalyses L-tyrosyl-[protein] + ATP = O-phospho-L-tyrosyl-[protein] + ADP + H(+). With respect to regulation, subject to autoinhibition, mediated by interactions between the FERM domain and the kinase domain. Activated by autophosphorylation at Tyr-397. This promotes interaction with SRC and phosphorylation at Tyr-576 and Tyr-577 in the kinase activation loop. Phosphorylation at Tyr-576 and Tyr-577 is required for maximal kinase activity. Inhibited by TAE226. Its function is as follows. Non-receptor protein-tyrosine kinase that plays an essential role in regulating cell migration, adhesion, spreading, reorganization of the actin cytoskeleton, formation and disassembly of focal adhesions and cell protrusions, cell cycle progression, cell proliferation and apoptosis. Required for early embryonic development, embryonic angiogenesis, normal cardiomyocyte migration and proliferation, and normal heart development. Regulates axon growth and neuronal cell migration, axon branching and synapse formation; required for normal development of the nervous system. Plays a role in osteogenesis and differentiation of osteoblasts. Functions in integrin signal transduction, but also in signaling downstream of numerous growth factor receptors, G-protein coupled receptors (GPCR), ephrin receptors, netrin receptors and LDL receptors. Forms multisubunit signaling complexes with SRC and SRC family members upon activation; this leads to the phosphorylation of additional tyrosine residues, creating binding sites for scaffold proteins, effectors and substrates. Regulates numerous signaling pathways. Promotes activation of phosphatidylinositol 3-kinase and the AKT1 signaling cascade. Promotes activation of MAPK1/ERK2, MAPK3/ERK1 and the MAP kinase signaling cascade. Promotes localized and transient activation of guanine nucleotide exchange factors (GEFs) and GTPase-activating proteins (GAPs), and thereby modulates the activity of Rho family GTPases. Signaling via CAS family members mediates activation of RAC1. Regulates P53/TP53 activity and stability. Phosphorylates SRC; this increases SRC kinase activity. Isoform 2 (FRNK) does not contain a kinase domain and inhibits PTK2/FAK1 phosphorylation and signaling. The protein is Focal adhesion kinase 1 (PTK2) of Gallus gallus (Chicken).